Here is a 260-residue protein sequence, read N- to C-terminus: Ribonuclease 3 (260 aa).

In terms of domain architecture, RNase III spans 16–145 (VQLLESRLGL…VFGAVFLTSG (130 aa)). Residue E58 coordinates Mg(2+). Residue D62 is part of the active site. 2 residues coordinate Mg(2+): D131 and E134. Residue E134 is part of the active site. In terms of domain architecture, DRBM spans 172-241 (DYKTLLQEMA…AQATLEKLRE (70 aa)). Residues 219-260 (ATGRSKKEAEQSAAQATLEKLREDAACPTSPPPGTPRHDTPA) are disordered.

The protein belongs to the ribonuclease III family. In terms of assembly, homodimer. The cofactor is Mg(2+).

The protein localises to the cytoplasm. The catalysed reaction is Endonucleolytic cleavage to 5'-phosphomonoester.. Digests double-stranded RNA. Involved in the processing of primary rRNA transcript to yield the immediate precursors to the large and small rRNAs (23S and 16S). Processes some mRNAs, and tRNAs when they are encoded in the rRNA operon. Processes pre-crRNA and tracrRNA of type II CRISPR loci if present in the organism. The sequence is that of Ribonuclease 3 from Myxococcus xanthus (strain DK1622).